Reading from the N-terminus, the 419-residue chain is Erythromycin esterase type II (419 aa).

Functionally, this enzyme confers resistance to erythromycin through inactivation by hydrolyzing the lactone ring of the antibiotic. The chain is Erythromycin esterase type II (ereB) from Escherichia coli.